The chain runs to 219 residues: Peptide methionine sulfoxide reductase MsrA (219 aa).

C58 is a catalytic residue.

It belongs to the MsrA Met sulfoxide reductase family.

The catalysed reaction is L-methionyl-[protein] + [thioredoxin]-disulfide + H2O = L-methionyl-(S)-S-oxide-[protein] + [thioredoxin]-dithiol. It catalyses the reaction [thioredoxin]-disulfide + L-methionine + H2O = L-methionine (S)-S-oxide + [thioredoxin]-dithiol. Functionally, has an important function as a repair enzyme for proteins that have been inactivated by oxidation. Catalyzes the reversible oxidation-reduction of methionine sulfoxide in proteins to methionine. This is Peptide methionine sulfoxide reductase MsrA from Ectopseudomonas mendocina (strain ymp) (Pseudomonas mendocina).